Consider the following 421-residue polypeptide: UDP-N-acetylglucosamine 1-carboxyvinyltransferase 2 (421 aa).

22 to 23 (KN) contributes to the phosphoenolpyruvate binding site. Arg94 is a binding site for UDP-N-acetyl-alpha-D-glucosamine. Catalysis depends on Cys118, which acts as the Proton donor. Residue Cys118 is modified to 2-(S-cysteinyl)pyruvic acid O-phosphothioketal. UDP-N-acetyl-alpha-D-glucosamine contacts are provided by Asp308 and Ile330.

The protein belongs to the EPSP synthase family. MurA subfamily.

It localises to the cytoplasm. It catalyses the reaction phosphoenolpyruvate + UDP-N-acetyl-alpha-D-glucosamine = UDP-N-acetyl-3-O-(1-carboxyvinyl)-alpha-D-glucosamine + phosphate. Its pathway is cell wall biogenesis; peptidoglycan biosynthesis. Functionally, cell wall formation. Adds enolpyruvyl to UDP-N-acetylglucosamine. This is UDP-N-acetylglucosamine 1-carboxyvinyltransferase 2 from Lactococcus lactis subsp. lactis (strain IL1403) (Streptococcus lactis).